A 1343-amino-acid chain; its full sequence is ABC multidrug transporter atrD (1343 aa).

The span at 1–10 shows a compositional bias: polar residues; the sequence is MSPLETNPLS. Positions 1–67 are disordered; that stretch reads MSPLETNPLS…HRPKSSSSNN (67 aa). Positions 20–31 are enriched in low complexity; sequence ETSTTEEQASTP. Asparagine 99 carries N-linked (GlcNAc...) asparagine glycosylation. Helical transmembrane passes span 114–134, 163–183, 235–255, and 263–283; these read ILIM…LPLF, YFVY…VGFI, KVGL…IAYV, and ICSS…QFII. Residues 115–403 form the ABC transmembrane type-1 1 domain; the sequence is LIMVISTICA…VSPNAQAFTN (289 aa). N-linked (GlcNAc...) asparagine glycosylation occurs at asparagine 309. The next 2 membrane-spanning stretches (helical) occupy residues 339-359 and 366-386; these read IVMG…YGLG and FLVD…AILI. One can recognise an ABC transporter 1 domain in the interval 438 to 683; that stretch reads IELRNVKHIY…GGAYRKLVEA (246 aa). ATP is bound at residue 473–480; the sequence is GPSGSGKS. N-linked (GlcNAc...) asparagine glycosylation is present at asparagine 545. 2 consecutive transmembrane segments (helical) span residues 773-793 and 820-840; these read MLIG…QAVL and LMFF…GAAF. Residues 774-1063 form the ABC transmembrane type-1 2 domain; that stretch reads LIGLVFSVLA…VFSFAPDMGK (290 aa). N-linked (GlcNAc...) asparagine glycosylation is present at asparagine 872. 4 consecutive transmembrane segments (helical) span residues 887-907, 920-942, 1010-1030, and 1037-1057; these read HLSG…TTLG, LALV…FYML, ALVF…LGHH, and FFVC…VFSF. Asparagine 1083 carries an N-linked (GlcNAc...) asparagine glycan. In terms of domain architecture, ABC transporter 2 spans 1098 to 1336; the sequence is IEFRNVHFRY…KGRYYELVNL (239 aa). 1133–1140 serves as a coordination point for ATP; the sequence is GPSGCGKS.

The protein belongs to the ABC transporter superfamily. ABCB family. Multidrug resistance exporter (TC 3.A.1.201) subfamily.

It is found in the cell membrane. Its activity is regulated as follows. Fenamirol efflux transporter activity is inhibited by the cyclosporin derivative PSC 833, nigericin, reserpine and valinomycin. The effect of reserpine is transiant, while that of the cyclosporin derivative PSC 833, nigericin and valinomycin is proportional to the time of exposure. Cyclohexinmide has inhibitory effect only when applied prior to addition of the fungicide. Functionally, pleiotropic ABC efflux transporter involved in the protection of the cells against a wide range of toxic compounds. Confers resistance to the azole fenarimol via efflux transport. May also be involved in the secretion of penicillin. The chain is ABC multidrug transporter atrD from Emericella nidulans (strain FGSC A4 / ATCC 38163 / CBS 112.46 / NRRL 194 / M139) (Aspergillus nidulans).